The sequence spans 254 residues: Protein orai-2 (254 aa).

Transmembrane regions (helical) follow at residues 66-83 (TSAL…EVQL), 94-114 (LIAF…ALLI), 148-168 (LAWG…VVLL), and 196-216 (AALV…VFTI).

Belongs to the Orai family. Oligomerizes in homomeric and heteromeric ORAI complexes. Native CRAC channels most likely consist of hexameric ORAI heteromers, implying that diverse ORAI1, ORAI2 and ORAI3 subunit combinations with distinct biophysical properties can operate in a cell-type specific way. Interacts with STIM1; this regulates channel activity. Interacts with CRACR2A/EFCAB4B.

The protein localises to the cell membrane. The catalysed reaction is Ca(2+)(in) = Ca(2+)(out). CRAC channels are regulated by fast Ca(2+)-dependent inactivation (FCDI), a mechanism that limits Ca(2+) influx and cell toxicity. ORAI2 channels display prominent FCDI. Inhibited by lanthanides such as Gd(3+) ions. In terms of biological role, pore-forming subunit of inward rectifying Ca(2+) release-activated Ca(2+) (CRAC) channels. Assembles with ORAI1 and ORAI3 to form hexameric CRAC channels that mediate Ca(2+) influx upon depletion of endoplasmic reticulum Ca(2+) store and channel activation by Ca(2+) sensor STIM1, a process known as store-operated Ca(2+) entry (SOCE). Various pore subunit combinations may account for distinct CRAC channel spatiotemporal and cell-type specific dynamics. ORAI1 mainly contributes to the generation of Ca(2+) plateaus involved in sustained Ca(2+) entry and is dispensable for cytosolic Ca(2+) oscillations, whereas ORAI2 and ORAI3 generate oscillatory patterns. CRAC channels assemble in Ca(2+) signaling microdomains where Ca(2+) influx is coupled to calmodulin and calcineurin signaling and activation of NFAT transcription factors recruited to ORAI1 via AKAP5. CRAC channels are the main pathway for Ca(2+) influx in T cells and promote the immune response to pathogens by activating NFAT-dependent cytokine and chemokine transcription. The polypeptide is Protein orai-2 (ORAI2) (Homo sapiens (Human)).